A 391-amino-acid chain; its full sequence is E3 ubiquitin-protein ligase RMND5A (391 aa).

Met-1 is modified (N-acetylmethionine). Residues 114–146 (SQRLLNEVMVEHFFRQGMLDVAEELCQESGLSV) enclose the LisH domain. The CTLH domain occupies 153–210 (PFVELNRILEALKVRVLRPALEWAVSNREMLIAQNSSLEFKLHRLYFISLLMGGTTNQ). The RING-Gid-type zinc finger occupies 336–377 (CPILRQQTTDNNPPMKLVCGHIISRDALNKMFNGSKLKCPYC).

As to quaternary structure, identified in the CTLH complex that contains GID4, RANBP9 and/or RANBP10, MKLN1, MAEA, RMND5A (or alternatively its paralog RMND5B), GID8, ARMC8, WDR26 and YPEL5. Within this complex, MAEA, RMND5A (or alternatively its paralog RMND5B), GID8, WDR26, and RANBP9 and/or RANBP10 form the catalytic core, while GID4, MKLN1, ARMC8 and YPEL5 have ancillary roles.

The protein localises to the nucleus. Its subcellular location is the nucleoplasm. It is found in the cytoplasm. The enzyme catalyses S-ubiquitinyl-[E2 ubiquitin-conjugating enzyme]-L-cysteine + [acceptor protein]-L-lysine = [E2 ubiquitin-conjugating enzyme]-L-cysteine + N(6)-ubiquitinyl-[acceptor protein]-L-lysine.. Functionally, core component of the CTLH E3 ubiquitin-protein ligase complex that selectively accepts ubiquitin from UBE2H and mediates ubiquitination and subsequent proteasomal degradation of the transcription factor HBP1. MAEA and RMND5A are both required for catalytic activity of the CTLH E3 ubiquitin-protein ligase complex. Catalytic activity of the complex is required for normal cell proliferation. The CTLH E3 ubiquitin-protein ligase complex is not required for the degradation of enzymes involved in gluconeogenesis, such as FBP1. The protein is E3 ubiquitin-protein ligase RMND5A (Rmnd5a) of Mus musculus (Mouse).